The primary structure comprises 698 residues: Effector protein AvrPphDPgy (698 aa).

A compositionally biased stretch (polar residues) spans 1–15; the sequence is MNPLRSIQHNITTPP. Disordered stretches follow at residues 1–36 and 171–200; these read MNPLRSIQHNITTPPISGGQPLDAVGPQAQQSHPKR and VDSSSPLLSSPDHSRPPSQHIGSVRRDSDS. Low complexity predominate over residues 172 to 181; that stretch reads DSSSPLLSSP.

The protein localises to the secreted. Functionally, effector protein involved in non-host recognition. The protein is Effector protein AvrPphDPgy (avrPphDPgy) of Pseudomonas savastanoi pv. glycinea (Pseudomonas syringae pv. glycinea).